Consider the following 361-residue polypeptide: Alanine racemase (361 aa).

The active-site Proton acceptor; specific for D-alanine is Lys34. Lys34 carries the post-translational modification N6-(pyridoxal phosphate)lysine. Arg129 is a substrate binding site. Tyr254 acts as the Proton acceptor; specific for L-alanine in catalysis. Met302 is a substrate binding site.

It belongs to the alanine racemase family. Pyridoxal 5'-phosphate is required as a cofactor.

It carries out the reaction L-alanine = D-alanine. The enzyme catalyses L-serine = D-serine. It functions in the pathway amino-acid biosynthesis; D-alanine biosynthesis; D-alanine from L-alanine: step 1/1. Its function is as follows. Catalyzes the interconversion of L-alanine and D-alanine. Likely plays an important role in supplying D-alanine, which is an indispensable constituent in the biosynthesis of bacterial cell-wall peptidoglycan. To a lesser extent, is also able to racemize L-serine and D-serine. Does not act on other proteinogenic amino-acids. The chain is Alanine racemase (alr1) from Vibrio cholerae serotype O1 (strain ATCC 39315 / El Tor Inaba N16961).